The following is a 355-amino-acid chain: Small ribosomal subunit protein uS2 (355 aa).

It belongs to the universal ribosomal protein uS2 family.

The sequence is that of Small ribosomal subunit protein uS2 from Methylorubrum extorquens (strain CM4 / NCIMB 13688) (Methylobacterium extorquens).